A 112-amino-acid chain; its full sequence is Ribosome-binding factor A (112 aa).

Belongs to the RbfA family. As to quaternary structure, monomer. Binds 30S ribosomal subunits, but not 50S ribosomal subunits or 70S ribosomes.

The protein resides in the cytoplasm. Its function is as follows. One of several proteins that assist in the late maturation steps of the functional core of the 30S ribosomal subunit. Associates with free 30S ribosomal subunits (but not with 30S subunits that are part of 70S ribosomes or polysomes). Required for efficient processing of 16S rRNA. May interact with the 5'-terminal helix region of 16S rRNA. The chain is Ribosome-binding factor A from Mycoplasma genitalium (strain ATCC 33530 / DSM 19775 / NCTC 10195 / G37) (Mycoplasmoides genitalium).